A 1067-amino-acid chain; its full sequence is Protein bric-a-brac 2 (1067 aa).

The interval Met-30 to Val-121 is disordered. 2 stretches are compositionally biased toward basic and acidic residues: residues His-47–Glu-62 and Lys-86–Lys-98. Tyr-55 carries the post-translational modification Phosphotyrosine. Ser-56, Ser-87, and Ser-147 each carry phosphoserine. A BTB domain is found at Val-223–Gln-288. Disordered regions lie at residues Gly-312 to Pro-412, Ala-444 to His-505, and Gly-525 to Asp-563. Positions Phe-326–Leu-335 are enriched in acidic residues. The residue at position 377 (Ser-377) is a Phosphoserine. Thr-384 carries the phosphothreonine modification. The segment covering Gly-391 to Pro-412 has biased composition (low complexity). 2 stretches are compositionally biased toward gly residues: residues Gly-525–Ser-538 and Gly-545–Ala-556. One can recognise an HTH psq-type domain in the interval Phe-635 to Met-687. Positions Arg-645 to Pro-690 form a DNA-binding region, H-T-H motif. Positions Asp-697 to Arg-708 form a DNA-binding region, a.T hook. 3 disordered regions span residues Gln-796–Gln-829, Ala-860–Ser-879, and Val-891–Ala-967. Low complexity predominate over residues Ala-812 to Gln-829. Low complexity predominate over residues Ala-904–Arg-914. A compositionally biased stretch (basic and acidic residues) spans Glu-915–Ser-933. Residues Arg-934–Ser-949 are compositionally biased toward low complexity.

Leg imaginal disk at the central region of the tarsus and in eye antenna disk at the basal cylinder.

Its subcellular location is the nucleus. Its function is as follows. Probably acts as a transcriptional regulator. Required for the specification of the tarsal segment. Also involved in antenna development. The polypeptide is Protein bric-a-brac 2 (bab2) (Drosophila melanogaster (Fruit fly)).